The chain runs to 107 residues: Putative ankyrin repeat protein RP714 (107 aa).

ANK repeat units lie at residues 7-36 (PPLS…DIDV), 40-69 (NGNS…TIDA), and 73-102 (ELAT…NKSA).

The sequence is that of Putative ankyrin repeat protein RP714 from Rickettsia prowazekii (strain Madrid E).